The chain runs to 139 residues: Gas vesicle protein A (139 aa).

A disordered region spans residues glutamate 113–arginine 139. Positions alanine 129–arginine 139 are enriched in basic residues.

Belongs to the gas vesicle GvpA family. In terms of assembly, the gas vesicle shell is 2 nm thick and consists of a single layer of this protein. It forms helical ribs nearly perpendicular to the long axis of the vesicle.

It is found in the gas vesicle shell. Its function is as follows. Gas vesicles are hollow, gas filled proteinaceous nanostructures found in some microorganisms. During planktonic growth they allow positioning of the organism at a favorable depth for light or nutrient acquisition. GvpA forms the protein shell. The protein is Gas vesicle protein A of Mycobacterium sp. (strain JLS).